A 521-amino-acid chain; its full sequence is Bifunctional purine biosynthesis protein PurH (521 aa).

Residues 1-147 (MAKITRALIS…KNNADVTVLV (147 aa)) enclose the MGS-like domain.

It belongs to the PurH family.

It catalyses the reaction (6R)-10-formyltetrahydrofolate + 5-amino-1-(5-phospho-beta-D-ribosyl)imidazole-4-carboxamide = 5-formamido-1-(5-phospho-D-ribosyl)imidazole-4-carboxamide + (6S)-5,6,7,8-tetrahydrofolate. The enzyme catalyses IMP + H2O = 5-formamido-1-(5-phospho-D-ribosyl)imidazole-4-carboxamide. It functions in the pathway purine metabolism; IMP biosynthesis via de novo pathway; 5-formamido-1-(5-phospho-D-ribosyl)imidazole-4-carboxamide from 5-amino-1-(5-phospho-D-ribosyl)imidazole-4-carboxamide (10-formyl THF route): step 1/1. It participates in purine metabolism; IMP biosynthesis via de novo pathway; IMP from 5-formamido-1-(5-phospho-D-ribosyl)imidazole-4-carboxamide: step 1/1. The polypeptide is Bifunctional purine biosynthesis protein PurH (Geobacter sulfurreducens (strain ATCC 51573 / DSM 12127 / PCA)).